The following is a 134-amino-acid chain: Small ribosomal subunit protein bS16 (134 aa).

The tract at residues 80-134 (GLAKRPTRSNPTKGEPGKKAQERLAMAKQAEEEAAAKAAEAAAAAAAPAEEAASE) is disordered. Residues 115–134 (AKAAEAAAAAAAPAEEAASE) show a composition bias toward low complexity.

The protein belongs to the bacterial ribosomal protein bS16 family.

This Brucella anthropi (strain ATCC 49188 / DSM 6882 / CCUG 24695 / JCM 21032 / LMG 3331 / NBRC 15819 / NCTC 12168 / Alc 37) (Ochrobactrum anthropi) protein is Small ribosomal subunit protein bS16.